Reading from the N-terminus, the 315-residue chain is L-lactate dehydrogenase (315 aa).

3 residues coordinate NAD(+): V14, D35, and Y66. Substrate contacts are provided by residues Q83, R89, and 121-124 (NPVD). NAD(+)-binding positions include 119 to 121 (VAN) and S144. 149–152 (DTAR) contacts substrate. H176 functions as the Proton acceptor in the catalytic mechanism. Y221 bears the Phosphotyrosine mark. T230 contributes to the substrate binding site.

It belongs to the LDH/MDH superfamily. LDH family. Homotetramer.

Its subcellular location is the cytoplasm. The catalysed reaction is (S)-lactate + NAD(+) = pyruvate + NADH + H(+). It functions in the pathway fermentation; pyruvate fermentation to lactate; (S)-lactate from pyruvate: step 1/1. Functionally, catalyzes the conversion of lactate to pyruvate. This Mesomycoplasma hyopneumoniae (strain 232) (Mycoplasma hyopneumoniae) protein is L-lactate dehydrogenase.